The primary structure comprises 1141 residues: Sterol regulatory element-binding protein 2 (1141 aa).

Residues 1-50 (MDDSGELGGLETMETLTELGDELTLGDIDEMLQFVSNQVGEFPDLFSEQL) are transcriptional activation (acidic). Residues 1–479 (MDDSGELGGL…PPVALGMVDR (479 aa)) lie on the Cytoplasmic side of the membrane. The segment at 48 to 144 (EQLCSSFPGS…PQPQPQPQTQ (97 aa)) is disordered. The span at 63-82 (SSGSSGSSSSSSNGRGSSSG) shows a compositional bias: low complexity. The span at 88-97 (VQRSFTQVTL) shows a compositional bias: polar residues. Residues 98–110 (PSFSPSAASPQAP) are compositionally biased toward low complexity. Residues 114 to 126 (VKVSPTSVPTTPR) are compositionally biased toward polar residues. The segment at 237 to 491 (QQVPVLVQPQ…ILLCVLTFLC (255 aa)) is interaction with LMNA. In terms of domain architecture, bHLH spans 330–380 (ERRTTHNIIEKRYRSSINDKIIELKDLVMGTDAKMHKSGVLRKAIDYIKYL). The tract at residues 380 to 401 (LQQVNHKLRQENMVLKLANQKN) is leucine-zipper. Lys-464 is covalently cross-linked (Glycyl lysine isopeptide (Lys-Gly) (interchain with G-Cter in SUMO2)). Residues 480–500 (SRILLCVLTFLCLSFNPLTSL) traverse the membrane as a helical segment. At 501-533 (LQWGGAHDSDQHPHSGSGRSVLSFESGSGGWFD) the chain is on the lumenal side. A helical membrane pass occupies residues 534–554 (WMMPTLLLWLVNGVIVLSVFV). Topologically, residues 555–1139 (KLLVHGEPVI…VKLGGGTAIA (585 aa)) are cytoplasmic. 2 positions are modified to phosphoserine: Ser-855 and Ser-1098.

Belongs to the SREBP family. In terms of assembly, forms a tight complex with SCAP, the SCAP-SREBP complex, in the endoplasmic reticulum membrane and the Golgi apparatus. Interacts with PAQR3; the interaction anchors the SCAP-SREBP complex to the Golgi apparatus in low cholesterol conditions. Interacts (via C-terminal domain) with RNF139. As to quaternary structure, homodimer; efficient DNA binding of the soluble transcription factor fragment requires dimerization with another bHLH protein. Interacts with LMNA. Post-translationally, processed in the Golgi apparatus, releasing the protein from the membrane. At low cholesterol the SCAP-SREBP complex is recruited into COPII vesicles for export from the endoplasmic reticulum. In the Golgi, complex SREBPs are cleaved sequentially by site-1 (MBTPS1, S1P) and site-2 (MBTPS2, S2P) protease. The first cleavage by site-1 protease occurs within the luminal loop, the second cleavage by site-2 protease occurs within the first transmembrane domain, releasing the transcription factor from the Golgi membrane. Apoptosis triggers cleavage by the cysteine proteases caspase-3 and caspase-7. Cleavage and activation is induced by mediated cholesterol efflux. Phosphorylated by AMPK, leading to suppress protein processing and nuclear translocation, and repress target gene expression. In terms of processing, SCAP-free SREBF2 is ubiquitinated by the BCR(ARMC5) complex, leading to its degradation. Post-translationally, ubiquitinated; the nuclear form has a rapid turnover and is rapidly ubiquitinated and degraded by the proteasome in the nucleus. As to expression, ubiquitously expressed in adult and fetal tissues.

The protein resides in the endoplasmic reticulum membrane. The protein localises to the golgi apparatus membrane. It is found in the cytoplasmic vesicle. Its subcellular location is the COPII-coated vesicle membrane. It localises to the nucleus. Activation by cleavage is down-regulated upon activation of SIRT3-dependent PRKAA1/AMPK-alpha signaling cascade which leads to inhibition of ATP-consuming lipogenesis to restore cellular energy balance. Precursor of the transcription factor form (Processed sterol regulatory element-binding protein 2), which is embedded in the endoplasmic reticulum membrane. Low sterol concentrations promote processing of this form, releasing the transcription factor form that translocates into the nucleus and activates transcription of genes involved in cholesterol biosynthesis. Its function is as follows. Key transcription factor that regulates expression of genes involved in cholesterol biosynthesis. Binds to the sterol regulatory element 1 (SRE-1) (5'-ATCACCCCAC-3'). Has dual sequence specificity binding to both an E-box motif (5'-ATCACGTGA-3') and to SRE-1 (5'-ATCACCCCAC-3'). Regulates transcription of genes related to cholesterol synthesis pathway. The polypeptide is Sterol regulatory element-binding protein 2 (Homo sapiens (Human)).